Reading from the N-terminus, the 73-residue chain is Large ribosomal subunit protein bL27c (73 aa).

The protein belongs to the bacterial ribosomal protein bL27 family.

The protein localises to the plastid. It localises to the chloroplast. In Chrysochromulina alifera (Plankton alga), this protein is Large ribosomal subunit protein bL27c (rpl27).